Here is a 985-residue protein sequence, read N- to C-terminus: Serine/threonine-protein kinase N2 (985 aa).

The REM-1 1 domain occupies 33–109 (KLDFSDTIVQ…LQELNAHIVV (77 aa)). Lysine 77 is modified (N6-acetyllysine). Position 110 is a phosphoserine (serine 110). Residues 111–136 (DPEDYTDCPRTPDTPNSDSRSSTSNN) are disordered. 2 positions are modified to phosphothreonine: threonine 121 and threonine 124. The segment covering 121–136 (TPDTPNSDSRSSTSNN) has biased composition (low complexity). REM-1 domains follow at residues 121-204 (TPDT…TNEL) and 207-286 (DNAK…ELPK). Residues serine 303, serine 307, serine 361, and serine 363 each carry the phosphoserine modification. A disordered region spans residues 352-383 (ATSVALPGWSPSENRSSFMSRTSKSKSGSSRN). One can recognise a C2 domain in the interval 354–474 (SVALPGWSPS…LYLEPQGTLF (121 aa)). Residues 366 to 382 (RSSFMSRTSKSKSGSSR) are compositionally biased toward low complexity. A necessary to rescue apical junction formation region spans residues 383–464 (NLLKTDDLSN…FLDNQRHGMA (82 aa)). Phosphoserine is present on residues serine 536, serine 584, serine 621, and serine 632. The tract at residues 570–590 (DLEPEAPPAPPRASSLGEIDD) is disordered. One can recognise a Protein kinase domain in the interval 658-917 (FRCCAVLGRG…AEDVKKHPFF (260 aa)). Residues 664–672 (LGRGHFGKV) and lysine 687 contribute to the ATP site. Residue aspartate 783 is the Proton acceptor of the active site. The residue at position 817 (threonine 817) is a Phosphothreonine; by PDPK1. The necessary for the catalytic activity stretch occupies residues 918-978 (RLTDWSALLD…EEEQEMFRDF (61 aa)). The AGC-kinase C-terminal domain occupies 918 to 985 (RLTDWSALLD…RDFDYVADWC (68 aa)). A Phosphoserine modification is found at serine 953. Phosphothreonine is present on threonine 959. The tract at residues 979 to 985 (DYVADWC) is negatively regulates the responsiveness of the catalytic activity by cardiolipin and is required for optimal activation by the GTP-bound RhoA.

This sequence belongs to the protein kinase superfamily. AGC Ser/Thr protein kinase family. PKC subfamily. As to quaternary structure, interacts (via the REM repeats) with RHOA (GTP-bound form preferentially) and interacts (via the REM repeats) with RAC1 (GTP-bound form preferentially); the interactions induce its autophosphorylation. Interacts with RHOC. Interacts with NCK1 (via SH3 domains) and NCK2. Interacts with CD44. Interacts (via C-terminal kinase domain) with PDPK1; the interaction stimulates PDPK1 kinase activity. Interacts with MAP3K2; the interaction activates PRK2 kinase activity in a MAP3K2-independent kinase activity. Interacts (via C-terminal domain) with AKT1; the interaction occurs with the C-terminal cleavage product of PRK2 in apoptotic cells. Interacts (via C-terminus) with PTPN13 (via PDZ 3 domain). Interacts with CDK10. Phosphorylated during mitosis. Autophosphorylated. Phosphorylated. Binding to Rho and Rac promotes autophosphorylation and phosphorylation on serine and threonine residues. Phosphorylated by CDK10. Post-translationally, proteolytically cleaved by caspase-3 during the induction of apoptotic cell death. Activated by limited proteolysis with trypsin. As to expression, expressed in liver (at protein level).

Its subcellular location is the cytoplasm. It localises to the nucleus. It is found in the membrane. The protein resides in the cell projection. The protein localises to the lamellipodium. Its subcellular location is the cytoskeleton. It localises to the cleavage furrow. It is found in the midbody. The protein resides in the cell junction. It carries out the reaction L-seryl-[protein] + ATP = O-phospho-L-seryl-[protein] + ADP + H(+). The enzyme catalyses L-threonyl-[protein] + ATP = O-phospho-L-threonyl-[protein] + ADP + H(+). With respect to regulation, kinase activity is activated upon binding to GTP-bound Rho1/Rac1 GTPases. Activated by caspase-3 (CASP3) cleavage during apoptosis. Activated by lipids, particularly cardiolipin and to a lesser extent by other acidic phospholipids and unsaturated fatty acids. Two specific sites, Thr-817 (activation loop of the kinase domain) and Thr-959 (turn motif), need to be phosphorylated for its full activation. In terms of biological role, PKC-related serine/threonine-protein kinase and Rho/Rac effector protein that participates in specific signal transduction responses in the cell. Plays a role in the regulation of cell cycle progression, actin cytoskeleton assembly, cell migration, cell adhesion, tumor cell invasion and transcription activation signaling processes. Phosphorylates CTTN in hyaluronan-induced astrocytes and hence decreases CTTN ability to associate with filamentous actin. Phosphorylates HDAC5, therefore lead to impair HDAC5 import. Direct RhoA target required for the regulation of the maturation of primordial junctions into apical junction formation in bronchial epithelial cells. Required for G2/M phases of the cell cycle progression and abscission during cytokinesis in a ECT2-dependent manner. Stimulates FYN kinase activity that is required for establishment of skin cell-cell adhesion during keratinocytes differentiation. Regulates epithelial bladder cells speed and direction of movement during cell migration and tumor cell invasion. Inhibits Akt pro-survival-induced kinase activity. Mediates Rho protein-induced transcriptional activation via the c-fos serum response factor (SRF). Involved in the negative regulation of ciliogenesis. In Rattus norvegicus (Rat), this protein is Serine/threonine-protein kinase N2 (Pkn2).